The chain runs to 2444 residues: Protein SON (2444 aa).

Alanine 2 carries the N-acetylalanine modification. Lysine 16 bears the N6-acetyllysine mark. Over residues 23 to 37 (ELSSGRSEGQLNGET) the composition is skewed to polar residues. The segment at 23–58 (ELSSGRSEGQLNGETNPPIEGNQAGDTAASARSLPN) is disordered. Lysine 64 participates in a covalent cross-link: Glycyl lysine isopeptide (Lys-Gly) (interchain with G-Cter in SUMO2). Basic and acidic residues predominate over residues 79–88 (YKPDLKEASR). The tract at residues 79 to 155 (YKPDLKEASR…GNLESDSFLK (77 aa)) is disordered. Position 94 is a phosphoserine (serine 94). The segment covering 106 to 130 (KKSKKHKKHKNKKKKKKKEKEKKYK) has biased composition (basic residues). Over residues 131 to 155 (RQPEESESKLKSHHDGNLESDSFLK) the composition is skewed to basic and acidic residues. Serine 142, serine 150, serine 152, and serine 158 each carry phosphoserine. At lysine 284 the chain carries N6-acetyllysine. Disordered stretches follow at residues 301 to 358 (TLTI…ESLE) and 391 to 468 (GPPV…PEPP). 2 stretches are compositionally biased toward pro residues: residues 393-406 (PVTP…PSAT) and 420-439 (PELP…PSVT). At threonine 395 the chain carries Phosphothreonine. Residues 721 to 850 (LASNTMDSQM…LATSSMDSQM (130 aa)) are 13 X 10 AA tandem repeats of L-A-[ST]-[NSG]-[TS]-MDSQM. The tract at residues 907–983 (DPYRLAQDPY…IAPRPYRLAP (77 aa)) is 11 X 7 AA tandem repeats of [DR]-P-Y-R-[LI][AG][QHP]. Arginine 945 bears the Omega-N-methylarginine mark. At threonine 954 the chain carries Phosphothreonine. Serine 993 is subject to Phosphoserine. 14 repeat units span residues 1001–1006 (ERSMMS), 1009–1014 (ERSMMS), 1016–1021 (ERSMMS), 1025–1030 (ERSMMS), 1033–1038 (ERSMMS), 1041–1046 (ERSMMS), 1050–1055 (ERSMMS), 1058–1063 (ERSMMS), 1066–1071 (ERSMMS), 1075–1080 (DRSMMS), 1084–1089 (DRSMMS), 1095–1100 (DRSMMS), 1106–1111 (DRSMMS), and 1115–1120 (DRSMMS). The 14 X 6 AA repeats of [ED]-R-S-M-M-S stretch occupies residues 1001–1120 (ERSMMSSYER…SSYTDRSMMS (120 aa)). Arginine 1002 is modified (asymmetric dimethylarginine). Arginine 1017 is subject to Asymmetric dimethylarginine. Residues serine 1030 and serine 1038 each carry the phosphoserine modification. Phosphoserine occurs at positions 1055 and 1063. Serine 1077 is subject to Phosphoserine. A compositionally biased stretch (pro residues) spans 1141 to 1168 (PPLPPEEPPTMPPLPPEEPPMTPPLPPE). Positions 1141-1173 (PPLPPEEPPTMPPLPPEEPPMTPPLPPEEPPEG) are 3 X 11 AA tandem repats of P-P-L-P-P-E-E-P-P-[TME]-[MTG]. The interval 1141–1213 (PPLPPEEPPT…PEPPVSQSEI (73 aa)) is disordered. The segment covering 1177 to 1213 (STEQSALTADNTWSTEVTLSTGESLSQPEPPVSQSEI) has biased composition (polar residues). Residues serine 1678, serine 1723, serine 1727, serine 1772, serine 1784, serine 1791, serine 1794, serine 1807, and serine 1808 each carry the phosphoserine modification. Positions 1802–2072 (ERASESSSEE…RSPKRLTDLD (271 aa)) are disordered. Basic and acidic residues-rich tracts occupy residues 1815-1826 (YEIFVKVKDTHE), 1834-1847 (RDKG…DSSL), and 1855-1870 (KSSE…ESRS). Basic residues-rich tracts occupy residues 1871–1934 (RARK…RKRS) and 1942–1973 (AARA…RRRS). 7 tandem repeats follow at residues 1950 to 1956 (PSRRSRS), 1959 to 1977 (PSRR…FSIS), 1978 to 1984 (PSRRSRT), 1985 to 1991 (PSRRSRT), 1992 to 1998 (PSRRSRT), 1999 to 2005 (PSRRSRT), and 2006 to 2012 (PSRRSRT). The interval 1950–2019 (PSRRSRSHTP…SRTPSRRRRS (70 aa)) is 7 X 7 AA repeats of P-S-R-R-S-R-[TS]. The tract at residues 1959-2030 (PSRRRRSRSV…SAVRRRSFSI (72 aa)) is 2 X 19 AA repeats of P-S-R-R-R-R-S-R-S-V-V-R-R-R-S-F-S-I-S. A phosphoserine mark is found at serine 1973, serine 1975, and serine 1977. The span at 1980–2027 (RRSRTPSRRSRTPSRRSRTPSRRSRTPSRRSRTPSRRRRSRSAVRRRS) shows a compositional bias: basic residues. The 2-7; approximate repeat unit spans residues 2013–2019 (PSRRRRS). A 3-2; approximate repeat occupies 2020-2030 (RSAVRRRSFSI). Residues serine 2027, serine 2029, serine 2031, serine 2047, and serine 2049 each carry the phosphoserine modification. Residues 2031–2057 (SPVRLRRSRTPLRRRFSRSPIRRKRSR) form a 3 X tandem repeats of [ST]-P-[VLI]-R-[RL]-[RK]-[RF]-S-R region. Basic residues predominate over residues 2034–2056 (RLRRSRTPLRRRFSRSPIRRKRS). The segment covering 2057–2072 (RSSERGRSPKRLTDLD) has biased composition (basic and acidic residues). Residue lysine 2073 is modified to N6-acetyllysine; alternate. Lysine 2073 is covalently cross-linked (Glycyl lysine isopeptide (Lys-Gly) (interchain with G-Cter in SUMO2); alternate). Lysine 2110 is covalently cross-linked (Glycyl lysine isopeptide (Lys-Gly) (interchain with G-Cter in SUMO2)). Phosphoserine is present on serine 2147. Lysine 2167 is covalently cross-linked (Glycyl lysine isopeptide (Lys-Gly) (interchain with G-Cter in SUMO2)). Threonine 2181 is subject to Phosphothreonine. The tract at residues 2192–2238 (EFPVSSGSQHRKKEADSVYGEWVPVEKNGEESKDDDNVFSSSLPSEP) is disordered. Serine 2256 carries the post-translational modification Phosphoserine. One can recognise a G-patch domain in the interval 2323-2369 (TGGMGAVLMRKMGWREGEGLGKNKEGNKEPILVDFKTDRKGLVAVGE). Residues 2389-2444 (HPVSALMEICNKRRWQPPEFLLVHDSGPDHRKHFLFRVLRNGSPYQPNCMFFLNRY) enclose the DRBM domain.

Interacts with SRSF2. Associates with the spliceosome. Interacts with USH1G. As to expression, widely expressed. Highly expressed in brain, heart, spleen, liver, skeletal muscle, kidney and testis.

It is found in the nucleus speckle. Functionally, RNA-binding protein that acts as a mRNA splicing cofactor by promoting efficient splicing of transcripts that possess weak splice sites. Specifically promotes splicing of many cell-cycle and DNA-repair transcripts that possess weak splice sites, such as TUBG1, KATNB1, TUBGCP2, AURKB, PCNT, AKT1, RAD23A, and FANCG. Probably acts by facilitating the interaction between Serine/arginine-rich proteins such as SRSF2 and the RNA polymerase II. Also binds to DNA; binds to the consensus DNA sequence: 5'-GA[GT]AN[CG][AG]CC-3'. Essential for correct RNA splicing of multiple genes critical for brain development, neuronal migration and metabolism, including TUBG1, FLNA, PNKP, WDR62, PSMD3, PCK2, PFKL, IDH2, and ACY1. May also regulate the ghrelin signaling in hypothalamic neuron by acting as a negative regulator of GHSR expression. The polypeptide is Protein SON (Son) (Mus musculus (Mouse)).